A 433-amino-acid chain; its full sequence is MKKYLAFAVTLLGMGKVIACTTLFVGNQASADGSFIIARNEDGSANNAKHKVIHPVAFHQQGEYKAHRNNFSWPLPETAMRYTAIHDFDTNDNAMGEAGFNSAGVGMSATETIYNGRAALAADPYVTKTGITEDAIESVILPVAQSARQGAKLLGDIIEQKGAGEGFGVAFIDSKEIWYLETGSGHQWLAVRLPADSYFVSANQGRLRHYDPNDNANYMASPTLVSFAKKQGLYDPARGEFDFHQAYSQDNKNDTTYNYPRVWTLQHQFNPHLDTVVSPGETFPVFLTPITKISVAAVKNALRNHYQGTSHDPYASHNPQEPWRPISVFRTQESHILQVRPKLPQAIGNVEYIAYGMPSLSVYLPYYQGMRHYQPGDDKGPIGRATTLPTGHSARCKRWLCRTTMRLRQMCNTPAKHLNSKQLSSSIRWSRAI.

Residue cysteine 20 is part of the active site.

Belongs to the peptidase C69 family.

The enzyme catalyses an L-aminoacyl-L-amino acid + H2O = 2 an L-alpha-amino acid. The sequence is that of Probable dipeptidase (pipD) from Salmonella dublin.